A 271-amino-acid chain; its full sequence is MNSPLAPVGVFDSGVGGLTVARAIIDQLPDEDIVYVGDTGNGPYGPLTIPEIRAHALAIGDDLVGRGVKALVIACNSASSACLRDARERYQVPVVEVILPAVRRAVAATRNGRIGVIGTRATITSHAYQDAFAAARDTEITAVACPRFVDFVELGVTSGRQVLGLAQGYLEPLQRAEVDTLVLGCTHYPLLSGLIQLAMGENVTLVSSAEETAKEVVRVLTEIDLLRPHDAPPATRIFEATGDPEAFTKLAARFLGPVLGGVQPVHPSRIH.

Substrate-binding positions include 12–13 (DS) and 44–45 (YG). The active-site Proton donor/acceptor is Cys75. Substrate is bound at residue 76-77 (NS). The active-site Proton donor/acceptor is Cys185. 186-187 (TH) serves as a coordination point for substrate.

This sequence belongs to the aspartate/glutamate racemases family.

It catalyses the reaction L-glutamate = D-glutamate. It participates in cell wall biogenesis; peptidoglycan biosynthesis. Provides the (R)-glutamate required for cell wall biosynthesis. This is Glutamate racemase from Mycobacterium bovis (strain BCG / Pasteur 1173P2).